The primary structure comprises 355 residues: Epoxide hydrolase 2 (355 aa).

Residues 78–323 (VLLMVHGFPE…IRGASHWVQQ (246 aa)) enclose the AB hydrolase-1 domain. D152 serves as the catalytic Nucleophile. Y263 functions as the Proton donor in the catalytic mechanism. The active-site Proton acceptor is H319.

This sequence belongs to the AB hydrolase superfamily. Epoxide hydrolase family.

It catalyses the reaction an epoxide + H2O = an ethanediol. Its pathway is lipid metabolism. Functionally, catalyzes the hydrolysis of epoxide-containing fatty acids. Active in vitro against trans-1,3-diphenylpropene oxide (t-DPPO), epoxyeicosatrienoic acids (EETs) including 8,9-EET, 11,12-EET and 14,15-EET and the linoleic acid metabolites 12,13-epoxy-9-octadecenoate (12,13-EpOME) and 9,10-epoxy-12-octadecenoate (9,10-EpOME). The protein is Epoxide hydrolase 2 of Caenorhabditis elegans.